The following is a 633-amino-acid chain: Leucine-rich repeat and IQ domain-containing protein 3 (633 aa).

LRR repeat units lie at residues 51–72, 73–94, and 98–119; these read SLRVCIFSNNFVTDIQPLQGCK, KLIKLDLHGNQIKTLPDRTFWN, and NLKLLYLHDNGFAKLKNICVLS. Positions 132-179 constitute an LRRCT domain; sequence CPVSLKKGYRHVLVNSIWPLKALDHHVISDEEIIQNWHLPERFKTFSQ. Positions 215–244 constitute an IQ domain; sequence HNSPVLIIQRWIRGFIVRKHLSPYFTRKRH. Positions 322–343 are disordered; sequence NSKQPRHHIQKGQNEMKSDSED. Positions 556 to 616 form a coiled coil; it reads EKREKRKYKQ…AKVEFINTYY (61 aa).

This is Leucine-rich repeat and IQ domain-containing protein 3 (Lrriq3) from Rattus norvegicus (Rat).